The sequence spans 180 residues: NADH-quinone oxidoreductase subunit I (180 aa).

2 4Fe-4S ferredoxin-type domains span residues 48-80 and 90-119; these read IVLT…LQKA and EFFR…LTPD. The [4Fe-4S] cluster site is built by Cys60, Cys63, Cys66, Cys70, Cys99, Cys102, Cys105, and Cys109. The span at 161-174 shows a compositional bias: basic and acidic residues; sequence KPKGDAEHEAKPID. The interval 161–180 is disordered; it reads KPKGDAEHEAKPIDVKSLLP.

This sequence belongs to the complex I 23 kDa subunit family. NDH-1 is composed of 14 different subunits. Subunits NuoA, H, J, K, L, M, N constitute the membrane sector of the complex. [4Fe-4S] cluster serves as cofactor.

The protein resides in the cell inner membrane. It carries out the reaction a quinone + NADH + 5 H(+)(in) = a quinol + NAD(+) + 4 H(+)(out). Functionally, NDH-1 shuttles electrons from NADH, via FMN and iron-sulfur (Fe-S) centers, to quinones in the respiratory chain. The immediate electron acceptor for the enzyme in this species is believed to be ubiquinone. Couples the redox reaction to proton translocation (for every two electrons transferred, four hydrogen ions are translocated across the cytoplasmic membrane), and thus conserves the redox energy in a proton gradient. The protein is NADH-quinone oxidoreductase subunit I of Aeromonas salmonicida (strain A449).